A 148-amino-acid polypeptide reads, in one-letter code: Large ribosomal subunit protein uL15 (148 aa).

Basic residues predominate over residues 1 to 30 (MPSRLRKTRKLRGHVSHGHGRIGKHRKHPG). The tract at residues 1–37 (MPSRLRKTRKLRGHVSHGHGRIGKHRKHPGGRGNAGG) is disordered. Residue His-39 is modified to (3S)-3-hydroxyhistidine. 2 positions are modified to N6-acetyllysine: Lys-47 and Lys-55. Ser-68 is modified (phosphoserine). Lys-110 carries the post-translational modification N6-acetyllysine.

The protein belongs to the universal ribosomal protein uL15 family. As to quaternary structure, component of the large ribosomal subunit. Hydroxylated on His-39 by MINA.

It localises to the cytoplasm. Component of the large ribosomal subunit. The ribosome is a large ribonucleoprotein complex responsible for the synthesis of proteins in the cell. The polypeptide is Large ribosomal subunit protein uL15 (RPL27A) (Bos taurus (Bovine)).